A 483-amino-acid chain; its full sequence is Glutamate--tRNA ligase (483 aa).

Positions 9-19 (PSPTGFLHIGN) match the 'HIGH' region motif. The 'KMSKS' region signature appears at 253–257 (KLSKR). Lysine 256 is an ATP binding site.

The protein belongs to the class-I aminoacyl-tRNA synthetase family. Glutamate--tRNA ligase type 1 subfamily. As to quaternary structure, monomer.

It is found in the cytoplasm. It carries out the reaction tRNA(Glu) + L-glutamate + ATP = L-glutamyl-tRNA(Glu) + AMP + diphosphate. In terms of biological role, catalyzes the attachment of glutamate to tRNA(Glu) in a two-step reaction: glutamate is first activated by ATP to form Glu-AMP and then transferred to the acceptor end of tRNA(Glu). The sequence is that of Glutamate--tRNA ligase from Mycoplasma mycoides subsp. mycoides SC (strain CCUG 32753 / NCTC 10114 / PG1).